Reading from the N-terminus, the 153-residue chain is MSKHSLIENLKKQIEPIVEGLNYELYHIEFVKEGKENYLRIYIDSENGVSLEGCEKVSRAVSELLDDIDPIQESYYLEVSSPGIDRVLYTDKHLEKYKGYNIVLNLYSSIDKKKKYEGELVDFNENEINIKVEENIVTIPREKISKTTLKGEL.

This sequence belongs to the RimP family.

It is found in the cytoplasm. In terms of biological role, required for maturation of 30S ribosomal subunits. In Clostridium botulinum (strain 657 / Type Ba4), this protein is Ribosome maturation factor RimP.